Consider the following 278-residue polypeptide: Probable F-box protein At1g14315 (278 aa).

An F-box domain is found at 1-43 (MQLLPHDTVEDILERVPVKSLLRFKSACKQWKLTIESQYFQAK).

The polypeptide is Probable F-box protein At1g14315 (Arabidopsis thaliana (Mouse-ear cress)).